Reading from the N-terminus, the 431-residue chain is Argininosuccinate lyase (431 aa).

Belongs to the lyase 1 family. Argininosuccinate lyase subfamily.

The protein localises to the cytoplasm. It carries out the reaction 2-(N(omega)-L-arginino)succinate = fumarate + L-arginine. Its pathway is amino-acid biosynthesis; L-arginine biosynthesis; L-arginine from L-ornithine and carbamoyl phosphate: step 3/3. The protein is Argininosuccinate lyase of Xanthomonas oryzae pv. oryzae (strain MAFF 311018).